The sequence spans 569 residues: Dicarboxylate transporter 1, chloroplastic (569 aa).

Residues 1–93 (MASMALSLTS…VPSPAPVSAP (93 aa)) constitute a chloroplast transit peptide. Positions 23–74 (SLKPLSKSQPSISLPSLRSNASKSPSLSHKHFLSPPSLLLPHKLKPISASSP) are enriched in low complexity. The disordered stretch occupies residues 23-93 (SLKPLSKSQP…VPSPAPVSAP (71 aa)). Residues 75–90 (TNPPPPPAPVPSPAPV) show a composition bias toward pro residues. The next 12 membrane-spanning stretches (helical) occupy residues 106–126 (PLLASILTGVIIWFIPTPEGV), 134–154 (LAIFLSTIVGIITQPLPLGAV), 172–192 (AAFSAFGDPIPWLIALAFFFA), 241–261 (AGGIFLPLVKSLCIACGSNVG), 268–288 (LGAWLMLTCFQTSVISSSMFL), 317–337 (AAFVPGLVSLIVVPLLLYVVY), 367–387 (IMAVTLLLTVGLWVFGGKLGV), 388–408 (DAVTAAILGLSVLLITGVVTW), 423–443 (WFAALIAMAGYLNKYGLITWF), 450–470 (VVGGLGLSWQMSFGVLVLLYF), 490–510 (FLSVASALGTPPFLAAIVLSF), and 543–563 (YGFLISIVNLIIWLGVGGLWW).

Belongs to the SLC13A/DASS transporter (TC 2.A.47) family. DIT1 subfamily. Monomer. Post-translationally, the N-terminus is blocked. In terms of tissue distribution, expressed in leaves.

The protein resides in the plastid. It is found in the chloroplast inner membrane. 2-oxoglutarate/malate translocator that transports carbon skeletons into chloroplasts for net glutamate synthesis. This translocator exchanges malate for internal succinate, fumarate and 2-oxoglutarate but not for aspartate and glutamate. Involved with DIT2 in primary ammonia assimilation and in the re-assimilation of ammonia generated by the photorespiratory pathway. Imports 2-oxoglutarate into plastids as precursor for ammonia assimilation. 2-oxoglutarate is converted to glutamate, the end product of ammonia assimilation, which is exported to the cytosol by DIT2. The chain is Dicarboxylate transporter 1, chloroplastic (DIT1) from Spinacia oleracea (Spinach).